A 64-amino-acid chain; its full sequence is Translation machinery-associated protein 7 homolog (64 aa).

A disordered region spans residues 1-64 (MSGREGGKKK…GGGIKKSGKK (64 aa)). Positions 27-38 (MAFKQKQKEQQK) are enriched in basic and acidic residues. A coiled-coil region spans residues 27-50 (MAFKQKQKEQQKALEAAKANASKK). Over residues 39-50 (ALEAAKANASKK) the composition is skewed to low complexity. The span at 53–64 (LVGGGIKKSGKK) shows a compositional bias: gly residues.

The sequence is that of Translation machinery-associated protein 7 homolog from Drosophila melanogaster (Fruit fly).